The following is a 168-amino-acid chain: MIVFYLSGDRVFSTDQNAINGLYNKRHFGKLVEGKLFLSLLEATYLVERGKIEVREGKRKLTVEELMNLGRERDELFDAKYLVYKDLRDRGYTVKSGLKFGSHFRVYRRGMDEHSQWLVWVLPENSRLSPNDITARVRVAHGVRKNMIMAIVDEDADVTYYKVEWVRF.

Active-site residues include Y107, H114, and K145.

The protein belongs to the tRNA-intron endonuclease family. Archaeal short subfamily. As to quaternary structure, homotetramer; although the tetramer contains four active sites, only two participate in the cleavage. Therefore, it should be considered as a dimer of dimers.

The enzyme catalyses pretRNA = a 3'-half-tRNA molecule with a 5'-OH end + a 5'-half-tRNA molecule with a 2',3'-cyclic phosphate end + an intron with a 2',3'-cyclic phosphate and a 5'-hydroxyl terminus.. In terms of biological role, endonuclease that removes tRNA introns. Cleaves pre-tRNA at the 5'- and 3'-splice sites to release the intron. The products are an intron and two tRNA half-molecules bearing 2',3' cyclic phosphate and 5'-OH termini. Recognizes a pseudosymmetric substrate in which 2 bulged loops of 3 bases are separated by a stem of 4 bp. This is tRNA-splicing endonuclease from Thermococcus gammatolerans (strain DSM 15229 / JCM 11827 / EJ3).